The sequence spans 48 residues: Protein TUNAR (48 aa).

The segment at 1–20 is disordered; it reads MVITSGNDEDRGGQEKESKE. Basic and acidic residues predominate over residues 8 to 20; it reads DEDRGGQEKESKE. The helical transmembrane segment at 24–44 threads the bilayer; sequence LAMLGIIGTILNLIVIIFVYI.

As to quaternary structure, interacts with ATPase ATP2A2/SERCA2. Interacts with ATPase ATP2A3/SERCA3; the interaction occurs at low levels in low glucose conditions and is increased by high glucose levels. In terms of tissue distribution, in the adult, expressed in Purkinje cells in the cerebellum, in motor neurons and interneurons in the spinal cord and in neurons of the cortex, hippocampus and thalamus (at protein level). Also detected in the developing cortex, hippocampus and thalamus at embryonic day E15.5 (at protein level).

Its subcellular location is the endoplasmic reticulum membrane. The protein localises to the extracellular vesicle membrane. In terms of biological role, in neurons, plays a role in the regulation of intracellular Ca(2+), possibly by acting as an activator of ATP2A2/SERCA2, thus increasing the efficiency with which Ca(2+) is removed from the cytoplasm. Inhibits differentiation of embryonic stem cells into neurons and inhibits neurite outgrowth, likely as a result of its role in intracellular Ca(2+) regulation. In pancreatic beta cells, lowers Ca(2+) levels in the endoplasmic reticulum and enhances glucose-stimulated insulin secretion. The sequence is that of Protein TUNAR from Mus musculus (Mouse).